An 806-amino-acid chain; its full sequence is Glycerol-3-phosphate acyltransferase (806 aa).

The short motif at 305–310 is the HXXXXD motif element; that stretch reads CHRSHM.

The protein belongs to the GPAT/DAPAT family.

It localises to the cell inner membrane. The catalysed reaction is sn-glycerol 3-phosphate + an acyl-CoA = a 1-acyl-sn-glycero-3-phosphate + CoA. It functions in the pathway phospholipid metabolism; CDP-diacylglycerol biosynthesis; CDP-diacylglycerol from sn-glycerol 3-phosphate: step 1/3. This is Glycerol-3-phosphate acyltransferase from Enterobacter sp. (strain 638).